A 189-amino-acid polypeptide reads, in one-letter code: Probable hydrogen peroxide-inducible genes activator (189 aa).

The 58-residue stretch at 8-65 (PTLAGLRAFAAVAEKQHFGSAASALGVNQSTLSQALAGLESGLGVRLIERSTRRVFLT) folds into the HTH lysR-type domain. A DNA-binding region (H-T-H motif) is located at residues 25–44 (FGSAASALGVNQSTLSQALA).

Belongs to the LysR transcriptional regulatory family.

Required for the induction the katG gene for catalase. Involved in the response to hydrogen peroxide. In Mycobacterium xenopi, this protein is Probable hydrogen peroxide-inducible genes activator (oxyR).